Reading from the N-terminus, the 488-residue chain is Malonate-semialdehyde dehydrogenase (488 aa).

NAD(+) is bound by residues Ala150, Phe152, Lys176, Glu179, Arg180, Ser229, and Thr251. The active-site Nucleophile is the Cys284. Glu382 is a binding site for NAD(+).

It belongs to the aldehyde dehydrogenase family. IolA subfamily. Homotetramer.

It catalyses the reaction 3-oxopropanoate + NAD(+) + CoA + H2O = hydrogencarbonate + acetyl-CoA + NADH + H(+). The catalysed reaction is 2-methyl-3-oxopropanoate + NAD(+) + CoA + H2O = propanoyl-CoA + hydrogencarbonate + NADH + H(+). It participates in polyol metabolism; myo-inositol degradation into acetyl-CoA; acetyl-CoA from myo-inositol: step 7/7. Catalyzes the oxidation of malonate semialdehyde (MSA) and methylmalonate semialdehyde (MMSA) into acetyl-CoA and propanoyl-CoA, respectively. Is involved in a myo-inositol catabolic pathway. Bicarbonate, and not CO2, is the end-product of the enzymatic reaction. The sequence is that of Malonate-semialdehyde dehydrogenase from Listeria innocua serovar 6a (strain ATCC BAA-680 / CLIP 11262).